Here is a 299-residue protein sequence, read N- to C-terminus: Dye-decolorizing peroxidase YfeX (299 aa).

His-215 provides a ligand contact to heme.

The protein belongs to the DyP-type peroxidase family. It depends on heme b as a cofactor.

Its subcellular location is the cytoplasm. Functionally, has both general peroxidase activity and dye-decolorizing activity. Can catalyze the oxidation of 2,2'-azino-bis(3-ethylbenzothiazoline-6-sulphonic acid) (ABTS), and the phenolic compounds guaiacol and catechol. Also decolorizes the anthraquinone dye reactive blue 19 (RB19). The sequence is that of Dye-decolorizing peroxidase YfeX from Escherichia coli O157:H7.